We begin with the raw amino-acid sequence, 249 residues long: 5'-nucleotidase SurE (249 aa).

The a divalent metal cation site is built by Asp8, Asp9, Ser39, and Asn96.

It belongs to the SurE nucleotidase family. A divalent metal cation serves as cofactor.

The protein localises to the cytoplasm. The catalysed reaction is a ribonucleoside 5'-phosphate + H2O = a ribonucleoside + phosphate. In terms of biological role, nucleotidase that shows phosphatase activity on nucleoside 5'-monophosphates. The sequence is that of 5'-nucleotidase SurE from Clostridium tetani (strain Massachusetts / E88).